The primary structure comprises 88 residues: Cell division topological specificity factor (88 aa).

This sequence belongs to the MinE family.

Prevents the cell division inhibition by proteins MinC and MinD at internal division sites while permitting inhibition at polar sites. This ensures cell division at the proper site by restricting the formation of a division septum at the midpoint of the long axis of the cell. The chain is Cell division topological specificity factor from Acidovorax ebreus (strain TPSY) (Diaphorobacter sp. (strain TPSY)).